We begin with the raw amino-acid sequence, 942 residues long: Mitogen-activated protein kinase kinase kinase A (942 aa).

The region spanning 15–96 (FIRIKCILGD…NPTKIISTKF (82 aa)) is the PB1 domain. The disordered stretch occupies residues 107–144 (PLSSSLSPTQSLILNNNNNNNNNNNNNNNNNNNNNNNN). A Protein kinase domain is found at 170 to 429 (WQKGQILGRG…ANQLLKHPFI (260 aa)). Residues 176–184 (LGRGGYGSV) and lysine 199 each bind ATP. Catalysis depends on aspartate 297, which acts as the Proton acceptor. Low complexity predominate over residues 441–486 (ISPTTTLSTNTTNTTATTTTTNNATNSNINQQQQQQQQQPPTRTQR). A disordered region spans residues 441–512 (ISPTTTLSTN…ISTSTSSSSS (72 aa)). Over residues 487–498 (VSISAGSSNNKR) the composition is skewed to polar residues. A compositionally biased stretch (low complexity) spans 500–512 (TPPISTSTSSSSS). The helical transmembrane segment at 513–533 (SILNNFSINIILPINLIILIF) threads the bilayer. In terms of domain architecture, F-box spans 518 to 564 (FSINIILPINLIILIFREIKPNFVNTLSRVCKHWKQIIDDDELWNKY). WD repeat units follow at residues 607–646 (GHDK…HHNH), 690–733 (GHSG…TLFT), 736–778 (NHQE…STLR), 780–825 (HTGG…KVRS), 828–865 (QHTE…TIST), 872–909 (RQKN…DSRS), and 912–942 (GHHE…WSID).

This sequence belongs to the protein kinase superfamily. STE Ser/Thr protein kinase family. MAP kinase kinase kinase subfamily. As to quaternary structure, interacts with ubcB and ubpB. Mg(2+) serves as cofactor. Post-translationally, ubcB and ubpB differentially control ubiquitination/deubiquitination and degradation in a cell-type-specific and temporally regulated manner.

It is found in the membrane. The enzyme catalyses L-seryl-[protein] + ATP = O-phospho-L-seryl-[protein] + ADP + H(+). It carries out the reaction L-threonyl-[protein] + ATP = O-phospho-L-threonyl-[protein] + ADP + H(+). Its function is as follows. Regulates cell-type differentiation and spatial patterning, required for the proper induction and maintenance of prespore cell differentiation. This chain is Mitogen-activated protein kinase kinase kinase A, found in Dictyostelium discoideum (Social amoeba).